Reading from the N-terminus, the 20-residue chain is Chemoheterotroph-specific protein (20 aa).

In Thiomonas delicata (Thiomonas cuprina), this protein is Chemoheterotroph-specific protein.